The chain runs to 2411 residues: Polyprotein P1234 (2411 aa).

In terms of domain architecture, Alphavirus-like MT spans 30-257; sequence EAVQTTPNDH…ESRKLLQSWH (228 aa). The nsP1 membrane-binding stretch occupies residues 242 to 261; the sequence is GSTLYTESRKLLQSWHLPST. S-palmitoyl cysteine; by host attachment occurs at residues Cys415 and Cys417. Residues 688-840 form the (+)RNA virus helicase ATP-binding domain; the sequence is ELVNPPFHEF…HDICSEVFHK (153 aa). 719-726 contacts a ribonucleoside 5'-triphosphate; the sequence is GVPGSGKS. Residues 841–989 form the (+)RNA virus helicase C-terminal domain; it reads SISRRCTQDI…IAEWEAEHQG (149 aa). The region spanning 1002-1325 is the Peptidase C9 domain; it reads NTFMNKVNVC…RKANSIFQNT (324 aa). The segment at 1003–1022 is nucleolus localization signal; it reads TFMNKVNVCWAKTLTPVLET. The For cysteine protease nsP2 activity role is filled by Cys1011. The Nuclear export signal motif lies at 1056–1065; that stretch reads TKMYGFDLDT. Residue His1081 is the For cysteine protease nsP2 activity of the active site. The short motif at 1180-1184 is the Nuclear localization signal element; it reads PNKKI. In terms of domain architecture, Macro spans 1332 to 1491; the sequence is APAYRVKRGD…KIKEAIDHRT (160 aa). ADP-D-ribose is bound by residues Asp1341, Asn1355, Gly1363, Gly1443, Ile1444, and Tyr1445. Zn(2+) contacts are provided by Cys1593, Cys1595, Cys1618, and Cys1636. The segment at 1681–1720 is disordered; sequence DSSIGSLPVGDTRPIPAPRTIFRPVPAPRAPVLRTTPPPK. 2 short sequence motifs (FGDF; binding to host G3BP1) span residues 1760–1763 and 1778–1781; these read FGDF. The RdRp catalytic domain occupies 2165 to 2280; that stretch reads DHVLETDIAS…HGIISDKLMA (116 aa).

In terms of assembly, interacts with non-structural protein 3. Interacts with RNA-directed RNA polymerase nsP4. Interacts with protease nsP2. interacts with itself. Interacts with mRNA-capping enzyme nsP1. Interacts with host DDX1. Interacts with host DDX3. Interacts (via C-terminus) with host G3BP1; this interaction inhibits the formation of host stress granules on viral mRNAs and the nsp3-G3BP1 complexes bind viral RNAs and probably orchestrate the assembly of viral replication complexes. Interacts (via C-terminus) with host G3BP2; this interaction inhibits the formation of host stress granules on viral mRNAs and the nsp3-G3BP2 complexes bind viral RNAs and probably orchestrate the assembly of viral replication complexes. As to quaternary structure, interacts with mRNA-capping enzyme nsP1. Interacts with protease nsP2. interacts with itself. In terms of assembly, interacts with RNA-directed RNA polymerase nsP4. Interacts with mRNA-capping enzyme nsP1. Interacts with KPNA1/karyopherin-alpha1; this interaction probably allows the active transport of protease nsP2 into the host nucleus. The cofactor is Mg(2+). It depends on Mn(2+) as a cofactor. Specific enzymatic cleavages in vivo yield mature proteins. The processing of the polyprotein is temporally regulated. In early stages (1.7 hpi), P1234 is first cleaved in trans through its nsP2 protease activity, releasing P123' and nsP4, which associate to form the early replication complex. At the same time, P1234 is also cut at the nsP1/nsP2 site early in infection but with lower efficiency. After replication of the viral minus-strand RNAs (4 hpi), the polyproteins are cut at the nsP1/nsP2 and nsP2/nsP3 sites very efficiently, preventing accumulation of P123' and P1234 and allowing the formation of the late replication complex. NsP3'/nsP4 site is not cleaved anymore and P34 is produced rather than nsP4. Post-translationally, specific enzymatic cleavages in vivo yield mature proteins. The processing of the polyprotein is temporally regulated. In early stages (1.7 hpi), P123 is cleaved at the nsP1/nsP2 site with low efficiency. After replication of the viral minus-strand RNAs (4 hpi), the polyproteins are cut at the nsP1/nsP2 and nsP2/nsP3 sites very efficiently, preventing accumulation of P123 and allowing the formation of the late replication complex. In terms of processing, specific enzymatic cleavages in vivo yield mature proteins. The processing of the polyprotein is temporally regulated. In early stages (1.7 hpi), P123' is cleaved at the nsP1/nsP2 site with low efficiency. After replication of the viral minus-strand RNAs (4 hpi), the polyproteins are cut at the nsP1/nsP2 and nsP2/nsP3 sites very efficiently, preventing accumulation of P123' and allowing the formation of the late replication complex. Palmitoylated by host palmitoyltransferases ZDHHC2 and ZDHHC19. Post-translationally, phosphorylated by host on serines and threonines. In terms of processing, ubiquitinated; targets the protein for rapid degradation via the ubiquitin system. Nsp4 is present in extremely low quantities due to low frequency of translation through the amber stop-codon and the degradation by the ubiquitin pathway.

Its subcellular location is the host cytoplasmic vesicle membrane. The protein localises to the host cell membrane. It is found in the host cell projection. The protein resides in the host filopodium. It localises to the host nucleus. Its subcellular location is the host cytoplasm. It carries out the reaction GTP + S-adenosyl-L-methionine = N(7)-methyl-GTP + S-adenosyl-L-homocysteine. The enzyme catalyses N(7)-methyl-GTP + L-histidyl-[protein] = N(tele)-(N(7)-methylguanosine 5'-phospho)-L-histidyl-[protein] + diphosphate. It catalyses the reaction N(tele)-(N(7)-methylguanosine 5'-phospho)-L-histidyl-[protein] + a 5'-end diphospho-(purine-ribonucleoside) in mRNA + H(+) = a 5'-end (N(7)-methyl 5'-triphosphoguanosine)-(purine-ribonucleoside) in mRNA + L-histidyl-[protein]. The catalysed reaction is a 5'-end triphospho-ribonucleoside in mRNA + H2O = a 5'-end diphospho-ribonucleoside in mRNA + phosphate + H(+). It carries out the reaction a ribonucleoside 5'-triphosphate + H2O = a ribonucleoside 5'-diphosphate + phosphate + H(+). The enzyme catalyses ATP + H2O = ADP + phosphate + H(+). It catalyses the reaction RNA(n) + a ribonucleoside 5'-triphosphate = RNA(n+1) + diphosphate. The catalysed reaction is RNA(n) + ATP = RNA(n)-3'-adenine ribonucleotide + diphosphate. It carries out the reaction 4-O-(ADP-D-ribosyl)-L-aspartyl-[protein] + H2O = L-aspartyl-[protein] + ADP-D-ribose + H(+). The enzyme catalyses 5-O-(ADP-D-ribosyl)-L-glutamyl-[protein] + H2O = L-glutamyl-[protein] + ADP-D-ribose + H(+). It catalyses the reaction ADP-alpha-D-ribose 1''-phosphate + H2O = ADP-D-ribose + phosphate. Functionally, inactive precursor of the viral replicase, which is activated by cleavages carried out by the viral protease nsP2. The early replication complex formed by the polyprotein P123 and nsP4 synthesizes minus-strand RNAs. As soon P123 is cleaved into mature proteins, the plus-strand RNAs synthesis begins. In terms of biological role, the early replication complex formed by the polyprotein P123' and nsP4 synthesizes minus-strand RNAs. Polyprotein P123' is a short-lived polyprotein that accumulates during early stage of infection. As soon P123' is cleaved into mature proteins, the plus-strand RNAs synthesis begins. Its function is as follows. Cytoplasmic capping enzyme that catalyzes two virus-specific reactions: methyltransferase and nsP1 guanylyltransferase. mRNA-capping is necessary since all viral RNAs are synthesized in the cytoplasm, and host capping enzymes are restricted to the nucleus. The enzymatic reaction involves a covalent link between 7-methyl-GMP and nsP1, whereas eukaryotic capping enzymes form a covalent complex only with GMP. nsP1 capping consists in the following reactions: GTP is first methylated into 7-methyl-GMP and then is covalently linked to nsP1 to form the m7GMp-nsP1 complex from which 7-methyl-GMP complex is transferred to the mRNA to create the cap structure. NsP1 is needed for the initiation of the minus-strand RNAs synthesis. Probably serves as a membrane anchor for the replication complex composed of nsP1-nsP4. Palmitoylated nsP1 is remodeling host cell cytoskeleton, and induces filopodium-like structure formation at the surface of the host cell. Functionally, multifunctional protein whose N-terminus is part of the RNA polymerase complex and displays NTPase, RNA triphosphatase and helicase activities. NTPase and RNA triphosphatase are involved in viral RNA capping and helicase keeps a check on the dsRNA replication intermediates. The C-terminus harbors a protease that specifically cleaves the polyproteins and releases the mature proteins. Required for the shutoff of minus-strand RNAs synthesis. Specifically inhibits the host IFN response by promoting the nuclear export of host STAT1. Also inhibits host transcription by inducing rapid proteasome-dependent degradation of POLR2A, a catalytic subunit of the RNAPII complex. The resulting inhibition of cellular protein synthesis serves to ensure maximal viral gene expression and to evade host immune response. Seems to be essential for minus-strand RNAs and subgenomic 26S mRNAs synthesis. Displays mono-ADP-ribosylhydrolase activity. ADP-ribosylation is a post-translational modification that controls various processes of the host cell and the virus probably needs to revert it for optimal viral replication. Binds proteins of FXR family and sequesters them into the viral RNA replication complexes thereby inhibiting the formation of host stress granules on viral mRNAs. The nsp3-FXR complexes bind viral RNAs and probably orchestrate the assembly of viral replication complexes, thanks to the ability of FXR family members to self-assemble and bind DNA. In terms of biological role, seems to be essential for minus-strand RNAs and subgenomic 26S mRNAs synthesis. Displays mono-ADP-ribosylhydrolase activity. ADP-ribosylation is a post-translantional modification that controls various processes of the host cell and the virus probably needs to revert it for optimal viral replication. Binds proteins of G3BP family and sequesters them into the viral RNA replication complexes thereby inhibiting the formation of host stress granules on viral mRNAs. The nsp3'-G3BP complexes bind viral RNAs and probably orchestrate the assembly of viral replication complexes, thanks to the ability of G3BP family members to self-assemble and bind DNA. Its function is as follows. RNA dependent RNA polymerase. Replicates genomic and antigenomic RNA by recognizing replications specific signals. The early replication complex formed by the polyprotein P123 and nsP4 synthesizes minus-strand RNAs. The late replication complex composed of fully processed nsP1-nsP4 is responsible for the production of genomic and subgenomic plus-strand RNAs. The core catalytic domain of nsP4 also possesses terminal adenylyltransferase (TATase) activity that is probably involved in maintenance and repair of the poly(A) tail, an element required for replication of the viral genome. This Barmah forest virus (BFV) protein is Polyprotein P1234.